The primary structure comprises 304 residues: MKVGVVGTGFVGSTAAFALVLRGSCSELVLVDRDEDRAQAEAEDIAHAAPVSHGTRVWHGGHSELADAQVVILTAGANQKPGESRLDLLEKNADIFRELVPQITRAAPDAVLLVTSNPVDLLTDLATQLAPGQPVIGSGTVLDSARFRHLMAQHAGVDGTHAHGYVLGEHGDSEVLAWSSAMVAGMPVADFMQAQNLPWNEQVRAKIDEGTRNAAASIIEGKRATYYGIGAALARITEAVLRDRRAVLTVSAPTPEYGVSLSLPRVVGRQGVLSTLHPKLTGDEQQKLEQSAGVLRGFKQQLGL.

NAD(+) is bound by residues valine 11, aspartate 32, arginine 37, and 76 to 77 (GA). Substrate is bound by residues glutamine 79, arginine 85, and 117–120 (NPVD). Serine 138 is a binding site for NAD(+). Position 143–146 (143–146 (DSAR)) interacts with substrate. Residues arginine 148 and histidine 163 each coordinate beta-D-fructose 1,6-bisphosphate. The Proton acceptor role is filled by histidine 170. Threonine 225 is a substrate binding site.

This sequence belongs to the LDH/MDH superfamily. LDH family. As to quaternary structure, homotetramer.

The protein localises to the cytoplasm. It catalyses the reaction (S)-lactate + NAD(+) = pyruvate + NADH + H(+). It functions in the pathway fermentation; pyruvate fermentation to lactate; (S)-lactate from pyruvate: step 1/1. With respect to regulation, allosterically activated by fructose 1,6-bisphosphate (FBP). Its function is as follows. Catalyzes the conversion of lactate to pyruvate. The protein is L-lactate dehydrogenase of Deinococcus radiodurans (strain ATCC 13939 / DSM 20539 / JCM 16871 / CCUG 27074 / LMG 4051 / NBRC 15346 / NCIMB 9279 / VKM B-1422 / R1).